Here is a 172-residue protein sequence, read N- to C-terminus: Endoribonuclease YbeY (172 aa).

The disordered stretch occupies residues 1–21 (MTLHVGAEPAPREDDTEDALR). A compositionally biased stretch (basic and acidic residues) spans 10–21 (APREDDTEDALR). Residues H134, H138, and H144 each contribute to the Zn(2+) site.

This sequence belongs to the endoribonuclease YbeY family. Zn(2+) serves as cofactor.

Its subcellular location is the cytoplasm. Functionally, single strand-specific metallo-endoribonuclease involved in late-stage 70S ribosome quality control and in maturation of the 3' terminus of the 16S rRNA. This is Endoribonuclease YbeY from Burkholderia lata (strain ATCC 17760 / DSM 23089 / LMG 22485 / NCIMB 9086 / R18194 / 383).